The primary structure comprises 177 residues: Large ribosomal subunit protein uL6 (177 aa).

This sequence belongs to the universal ribosomal protein uL6 family. Part of the 50S ribosomal subunit.

Its function is as follows. This protein binds to the 23S rRNA, and is important in its secondary structure. It is located near the subunit interface in the base of the L7/L12 stalk, and near the tRNA binding site of the peptidyltransferase center. The protein is Large ribosomal subunit protein uL6 of Cronobacter sakazakii (strain ATCC BAA-894) (Enterobacter sakazakii).